Here is a 259-residue protein sequence, read N- to C-terminus: Phosphatidylglycerol--prolipoprotein diacylglyceryl transferase (259 aa).

4 consecutive transmembrane segments (helical) span residues 12–32 (LSLHWYAVCILVGLLLAVYLA), 46–66 (IIDFILIAFPLAIIGARIYYV), 83–103 (IWNGGIAIYGGLITGTIVLFV), and 109–129 (VLNPIHFLDIAAPSVMLAQAI). A 1,2-diacyl-sn-glycero-3-phospho-(1'-sn-glycerol) is bound at residue Arg-131. The next 3 membrane-spanning stretches (helical) occupy residues 167–187 (VPTFLYESMWNLIGFVIIMVW), 194–214 (LLDGDIISFYLIWYGCGRLVI), and 226–246 (GIRVSQYVSVLLIIIAIVFIF).

It belongs to the Lgt family.

It is found in the cell membrane. It catalyses the reaction L-cysteinyl-[prolipoprotein] + a 1,2-diacyl-sn-glycero-3-phospho-(1'-sn-glycerol) = an S-1,2-diacyl-sn-glyceryl-L-cysteinyl-[prolipoprotein] + sn-glycerol 1-phosphate + H(+). It participates in protein modification; lipoprotein biosynthesis (diacylglyceryl transfer). Catalyzes the transfer of the diacylglyceryl group from phosphatidylglycerol to the sulfhydryl group of the N-terminal cysteine of a prolipoprotein, the first step in the formation of mature lipoproteins. The protein is Phosphatidylglycerol--prolipoprotein diacylglyceryl transferase of Streptococcus equi subsp. zooepidemicus (strain H70).